A 353-amino-acid chain; its full sequence is N-acetyl-gamma-glutamyl-phosphate reductase (353 aa).

Cys-155 is a catalytic residue.

The protein belongs to the NAGSA dehydrogenase family. Type 1 subfamily.

It localises to the cytoplasm. The enzyme catalyses N-acetyl-L-glutamate 5-semialdehyde + phosphate + NADP(+) = N-acetyl-L-glutamyl 5-phosphate + NADPH + H(+). It functions in the pathway amino-acid biosynthesis; L-arginine biosynthesis; N(2)-acetyl-L-ornithine from L-glutamate: step 3/4. Functionally, catalyzes the NADPH-dependent reduction of N-acetyl-5-glutamyl phosphate to yield N-acetyl-L-glutamate 5-semialdehyde. The sequence is that of N-acetyl-gamma-glutamyl-phosphate reductase from Microcystis aeruginosa (strain NIES-843 / IAM M-2473).